The following is a 228-amino-acid chain: Deoxyribose-phosphate aldolase (228 aa).

Residue Asp-93 is the Proton donor/acceptor of the active site. Lys-159 functions as the Schiff-base intermediate with acetaldehyde in the catalytic mechanism. The active-site Proton donor/acceptor is Lys-188.

Belongs to the DeoC/FbaB aldolase family. DeoC type 1 subfamily.

The protein localises to the cytoplasm. The enzyme catalyses 2-deoxy-D-ribose 5-phosphate = D-glyceraldehyde 3-phosphate + acetaldehyde. The protein operates within carbohydrate degradation; 2-deoxy-D-ribose 1-phosphate degradation; D-glyceraldehyde 3-phosphate and acetaldehyde from 2-deoxy-alpha-D-ribose 1-phosphate: step 2/2. In terms of biological role, catalyzes a reversible aldol reaction between acetaldehyde and D-glyceraldehyde 3-phosphate to generate 2-deoxy-D-ribose 5-phosphate. In Carboxydothermus hydrogenoformans (strain ATCC BAA-161 / DSM 6008 / Z-2901), this protein is Deoxyribose-phosphate aldolase.